Reading from the N-terminus, the 355-residue chain is Hydroxylysine kinase (355 aa).

The Proton acceptor role is filled by D215.

It belongs to the aminoglycoside phosphotransferase family.

Its subcellular location is the cytoplasm. The enzyme catalyses (5R)-5-hydroxy-L-lysine + GTP = (5R)-5-phosphooxy-L-lysine + GDP + H(+). In terms of biological role, catalyzes the GTP-dependent phosphorylation of 5-hydroxy-L-lysine. The protein is Hydroxylysine kinase (hykk) of Danio rerio (Zebrafish).